The following is a 431-amino-acid chain: Enolase (431 aa).

Gln-167 is a binding site for (2R)-2-phosphoglycerate. The Proton donor role is filled by Glu-209. Positions 246, 289, and 316 each coordinate Mg(2+). Residues Lys-341, Arg-370, Ser-371, and Lys-392 each coordinate (2R)-2-phosphoglycerate. The active-site Proton acceptor is Lys-341.

It belongs to the enolase family. Component of the RNA degradosome, a multiprotein complex involved in RNA processing and mRNA degradation. Mg(2+) serves as cofactor.

It localises to the cytoplasm. It is found in the secreted. The protein localises to the cell surface. It catalyses the reaction (2R)-2-phosphoglycerate = phosphoenolpyruvate + H2O. Its pathway is carbohydrate degradation; glycolysis; pyruvate from D-glyceraldehyde 3-phosphate: step 4/5. Functionally, catalyzes the reversible conversion of 2-phosphoglycerate (2-PG) into phosphoenolpyruvate (PEP). It is essential for the degradation of carbohydrates via glycolysis. The protein is Enolase of Shewanella woodyi (strain ATCC 51908 / MS32).